Consider the following 113-residue polypeptide: Colicin-E1* immunity protein (113 aa).

Its function is as follows. This protein is able to protect a cell, which harbors the plasmid pKY-1 encoding colicin E1*, against colicin E1*. This is Colicin-E1* immunity protein (imm) from Shigella sonnei.